Reading from the N-terminus, the 348-residue chain is MATLLQTSKVMKVAGLSLVVFLAACSSDQRYKRQVNGDESYLETPPLKTLNIPGGMILPLQNGEYDVPSATSTGAVGKELDIRPPLQALALLTGSRIENSAQSSKLLLENTSEYSKLWSQVVSLLAKKNYQISQKDEAAQTLTTDWITWQRADENVPYQGRYHVSVSQQDYQTTLSVSSDGLKQGEQDITDPAAIQRYNVLMLNELAGGLSQQQEEAGQNNAKDSGALTVQSGSDNTGLAQIIVRAPYNVVWNRLPYALESIGMQVTDRTRSTGSIAVTYKGRSSSDWKALGVEEPSVREGNYKLQVGDLDNRSSLQFISEKGKPLTQSENDQMVAVLEAAFSKSTDK.

The signal sequence occupies residues 1 to 24; it reads MATLLQTSKVMKVAGLSLVVFLAA. C25 carries N-palmitoyl cysteine lipidation. A lipid anchor (S-diacylglycerol cysteine) is attached at C25. Positions 211–230 are disordered; it reads SQQQEEAGQNNAKDSGALTV.

It belongs to the BamC family. As to quaternary structure, part of the Bam complex, which is composed of the outer membrane protein BamA, and four lipoproteins BamB, BamC, BamD and BamE.

The protein localises to the cell outer membrane. In terms of biological role, part of the outer membrane protein assembly complex, which is involved in assembly and insertion of beta-barrel proteins into the outer membrane. The protein is Outer membrane protein assembly factor BamC of Xenorhabdus nematophila (strain ATCC 19061 / DSM 3370 / CCUG 14189 / LMG 1036 / NCIMB 9965 / AN6).